The following is a 361-amino-acid chain: Chorismate synthase (361 aa).

Residues arginine 48 and arginine 54 each coordinate NADP(+). Residues 125–127 (RSS), 238–239 (NA), glycine 278, 293–297 (KPTSS), and arginine 319 each bind FMN.

It belongs to the chorismate synthase family. As to quaternary structure, homotetramer. FMNH2 is required as a cofactor.

It carries out the reaction 5-O-(1-carboxyvinyl)-3-phosphoshikimate = chorismate + phosphate. Its pathway is metabolic intermediate biosynthesis; chorismate biosynthesis; chorismate from D-erythrose 4-phosphate and phosphoenolpyruvate: step 7/7. In terms of biological role, catalyzes the anti-1,4-elimination of the C-3 phosphate and the C-6 proR hydrogen from 5-enolpyruvylshikimate-3-phosphate (EPSP) to yield chorismate, which is the branch point compound that serves as the starting substrate for the three terminal pathways of aromatic amino acid biosynthesis. This reaction introduces a second double bond into the aromatic ring system. The protein is Chorismate synthase of Proteus mirabilis (strain HI4320).